A 109-amino-acid polypeptide reads, in one-letter code: uncharacterized protein (109 aa).

The next 3 membrane-spanning stretches (helical) occupy residues His16–Phe36, Leu52–Leu72, and Ile87–Val107.

The protein resides in the cell membrane. This is an uncharacterized protein from Salmonella typhimurium (strain LT2 / SGSC1412 / ATCC 700720).